The following is an 83-amino-acid chain: Kunitz-type serine protease inhibitor TCI (83 aa).

Positions Met-1 to Leu-25 are cleaved as a signal peptide. One can recognise a BPTI/Kunitz inhibitor domain in the interval Cys-31–Cys-81. 3 disulfide bridges follow: Cys-31–Cys-81, Cys-40–Cys-64, and Cys-56–Cys-77.

As to expression, expressed by the venom gland.

The protein resides in the secreted. Functionally, serine protease inhibitor that strongly inhibits chymotrypsin (Ki=84.6 nM) and trypsin (Ki=391 nM). This chain is Kunitz-type serine protease inhibitor TCI, found in Ophiophagus hannah (King cobra).